Here is a 415-residue protein sequence, read N- to C-terminus: Sucrose permease (415 aa).

Residues 1–16 (MALNIPFRNAYYRFAS) lie on the Cytoplasmic side of the membrane. Residues 17–37 (SYSFLFFISWSLWWSLYAIWL) form a helical membrane-spanning segment. Residues 38-48 (KGHLGLTGTEL) lie on the Periplasmic side of the membrane. The chain crosses the membrane as a helical span at residues 49 to 69 (GTLYSVNQFTSILFMMFYGIV). Topologically, residues 70–77 (QDKLGLKK) are cytoplasmic. The chain crosses the membrane as a helical span at residues 78–98 (PLIWCMSFILVLTGPFMIYVY). Residues 99-107 (EPLLQSNFS) are Periplasmic-facing. A helical transmembrane segment spans residues 108–128 (VGLILGALFFGLGYLAGCGLL). Residues 129-147 (DSFTEKMARNFHFEYGTAR) are Cytoplasmic-facing. Residues 148–167 (AWGSFGYAIGAFFAGIFFSI) form a helical membrane-spanning segment. The Periplasmic segment spans residues 168-170 (SPH). Residues 171-190 (INFWLVSLFGAVFMMINMRF) traverse the membrane as a helical segment. Residues 191–220 (KDKDHQCIAADAGGVKKEDFIAVFKDRNFW) are Cytoplasmic-facing. A helical transmembrane segment spans residues 221–241 (VFVIFIVGTWSFYNIFDQQLF). Topologically, residues 242-260 (PVFYAGLFESHDVGTRLYG) are periplasmic. The chain crosses the membrane as a helical span at residues 261-281 (YLNSFQVVLEALCMAIIPFFV). Over 282-287 (NRVGPK) the chain is Cytoplasmic. The helical transmembrane segment at 288–308 (NALLIGVVIMALRILSCALFV) threads the bilayer. At 309-311 (NPW) the chain is on the periplasmic side. A helical transmembrane segment spans residues 312 to 332 (IISLVKLLHAIEVPLCVISVF). The Cytoplasmic segment spans residues 333–342 (KYSVANFDKR). A helical transmembrane segment spans residues 343-363 (LSSTIFLIGFQIASSLGIVLL). Over 364-377 (STPTGILFDHAGYQ) the chain is Periplasmic. The helical transmembrane segment at 378-398 (TVFFAISGIVCLMLLFGIFFL) threads the bilayer. The Cytoplasmic segment spans residues 399–415 (SKKREQIVMETPVPSAI).

This sequence belongs to the major facilitator superfamily. Oligosaccharide:H(+) symporter (OHS) (TC 2.A.1.5) family.

Its subcellular location is the cell inner membrane. Its pathway is glycan biosynthesis; sucrose metabolism. In terms of biological role, responsible for transport of sucrose into the cell, with the concomitant import of a proton (symport system). Can also transport maltose, fructose or lactulose, but not glucose, lactose or melibiose. The substrate specificity is directed toward the fructofuranosyl moiety of the substrate. This Escherichia coli protein is Sucrose permease.